The chain runs to 105 residues: Large ribosomal subunit protein bL21 (105 aa).

Belongs to the bacterial ribosomal protein bL21 family. In terms of assembly, part of the 50S ribosomal subunit. Contacts protein L20.

This protein binds to 23S rRNA in the presence of protein L20. This Rhizobium etli (strain CIAT 652) protein is Large ribosomal subunit protein bL21.